Reading from the N-terminus, the 439-residue chain is tRNA-2-methylthio-N(6)-dimethylallyladenosine synthase (439 aa).

Residues 2–119 (KYIYIKTWGC…LPKMIDEVEK (118 aa)) form the MTTase N-terminal domain. Cys-11, Cys-48, Cys-82, Cys-156, Cys-160, and Cys-163 together coordinate [4Fe-4S] cluster. The region spanning 142–374 (KKKGYTADIS…QERINIQTML (233 aa)) is the Radical SAM core domain. One can recognise a TRAM domain in the interval 377-439 (RKMFGSIQSV…HTHSLKGELF (63 aa)).

It belongs to the methylthiotransferase family. MiaB subfamily. In terms of assembly, monomer. [4Fe-4S] cluster serves as cofactor.

The protein resides in the cytoplasm. The enzyme catalyses N(6)-dimethylallyladenosine(37) in tRNA + (sulfur carrier)-SH + AH2 + 2 S-adenosyl-L-methionine = 2-methylsulfanyl-N(6)-dimethylallyladenosine(37) in tRNA + (sulfur carrier)-H + 5'-deoxyadenosine + L-methionine + A + S-adenosyl-L-homocysteine + 2 H(+). In terms of biological role, catalyzes the methylthiolation of N6-(dimethylallyl)adenosine (i(6)A), leading to the formation of 2-methylthio-N6-(dimethylallyl)adenosine (ms(2)i(6)A) at position 37 in tRNAs that read codons beginning with uridine. The chain is tRNA-2-methylthio-N(6)-dimethylallyladenosine synthase from Buchnera aphidicola subsp. Acyrthosiphon pisum (strain APS) (Acyrthosiphon pisum symbiotic bacterium).